Reading from the N-terminus, the 558-residue chain is Factor VII-activating protease (558 aa).

The signal sequence occupies residues 1-23 (MSVVMLVFRVLLLIALVGNSAIG). EGF-like domains follow at residues 71–107 (DDDP…SRCQ), 109–146 (VQNK…PDCS), and 148–186 (VLPV…RFCE). 18 cysteine pairs are disulfide-bonded: cysteine 75–cysteine 86, cysteine 80–cysteine 95, cysteine 97–cysteine 106, cysteine 113–cysteine 123, cysteine 118–cysteine 134, cysteine 136–cysteine 145, cysteine 152–cysteine 163, cysteine 157–cysteine 174, cysteine 176–cysteine 185, cysteine 192–cysteine 274, cysteine 213–cysteine 255, cysteine 244–cysteine 269, cysteine 299–cysteine 433, cysteine 345–cysteine 361, cysteine 353–cysteine 422, cysteine 445–cysteine 513, cysteine 475–cysteine 491, and cysteine 503–cysteine 531. The Kringle domain maps to 191–274 (DCYVGDGYSY…KWEYCNVEVC (84 aa)). Residues 312 to 553 (IYGGFKSTAG…FLNWIKTTMH (242 aa)) enclose the Peptidase S1 domain. Active-site charge relay system residues include histidine 360 and aspartate 409. Serine 507 functions as the Charge relay system in the catalytic mechanism.

It belongs to the peptidase S1 family. In terms of assembly, heterodimer; disulfide-linked. Heterodimer of a 50 kDa heavy and a 27 kDa light chain linked by a disulfide bond. Proteolytic cleavage at Gly-23 or Met-27 can give rise to the 50 kDa heavy chain (HC) and cleavage at Arg-311 or Lys-317 can give rise to the 27 kDa light chain (LC). The HC can undergo further proteolytic cleavage giving rise to a 26 kDa fragment. The LC can undergo further proteolytic cleavage at Arg-311 leading to a 17-kDa fragment and at Arg-478 leading to a 8-kDa fragment.

Its subcellular location is the secreted. In terms of biological role, cleaves the alpha-chain at multiple sites and the beta-chain between 'Lys-53' and 'Lys-54' but not the gamma-chain of fibrinogen and therefore does not initiate the formation of the fibrin clot and does not cause the fibrinolysis directly. It does not cleave (activate) prothrombin and plasminogen but converts the inactive single chain urinary plasminogen activator (pro-urokinase) to the active two chain form. Activates coagulation factor VII. May function as a tumor suppressor negatively regulating cell proliferation and cell migration. In Rattus norvegicus (Rat), this protein is Factor VII-activating protease.